The sequence spans 715 residues: ATP-dependent DNA helicase Hel308 (715 aa).

The Q motif motif lies at 1-29 (MKVEELRIDERIKEVLKKRGISELYPPQA). ATP is bound by residues Gln28 and 46–53 (IPTASGKT). A Helicase ATP-binding domain is found at 33–197 (TSGILKGENA…WLNAKLIKSD (165 aa)). The DEAH box signature appears at 145-148 (DEIH). The Helicase C-terminal domain maps to 229 to 422 (LVYDAIKRSK…ILRGQILALI (194 aa)).

The protein belongs to the helicase family. Hel308 subfamily. Monomer.

It carries out the reaction Couples ATP hydrolysis with the unwinding of duplex DNA by translocating in the 3'-5' direction.. The enzyme catalyses ATP + H2O = ADP + phosphate + H(+). Its function is as follows. DNA-dependent ATPase and 3'-5' DNA helicase that may be involved in repair of stalled replication forks. This is ATP-dependent DNA helicase Hel308 from Pyrococcus horikoshii (strain ATCC 700860 / DSM 12428 / JCM 9974 / NBRC 100139 / OT-3).